We begin with the raw amino-acid sequence, 487 residues long: NADH-quinone oxidoreductase subunit N (487 aa).

The next 14 membrane-spanning stretches (helical) occupy residues 8–28 (LIAM…MLSI), 35–55 (FINA…LYFV), 78–98 (GLVI…LVGY), 104–124 (EFYL…SANH), 125–145 (LASL…LIGY), 159–179 (YMLL…LLYA), 203–223 (ILAG…LVPF), 235–255 (PAPV…AVVM), 271–291 (LVLS…AISQ), 297–317 (LLGY…VAVQ), 328–348 (IGVY…VVSL), 376–396 (AVMT…GFIG), 409–428 (LWWL…YYYL), and 451–471 (ALTA…VLGI).

It belongs to the complex I subunit 2 family. NDH-1 is composed of 13 different subunits. Subunits NuoA, H, J, K, L, M, N constitute the membrane sector of the complex.

It is found in the cell inner membrane. The enzyme catalyses a quinone + NADH + 5 H(+)(in) = a quinol + NAD(+) + 4 H(+)(out). Functionally, NDH-1 shuttles electrons from NADH, via FMN and iron-sulfur (Fe-S) centers, to quinones in the respiratory chain. The immediate electron acceptor for the enzyme in this species is believed to be ubiquinone. Couples the redox reaction to proton translocation (for every two electrons transferred, four hydrogen ions are translocated across the cytoplasmic membrane), and thus conserves the redox energy in a proton gradient. In Yersinia pestis bv. Antiqua (strain Angola), this protein is NADH-quinone oxidoreductase subunit N.